Consider the following 123-residue polypeptide: Small ribosomal subunit protein bS16 (123 aa).

It belongs to the bacterial ribosomal protein bS16 family.

The polypeptide is Small ribosomal subunit protein bS16 (Treponema pallidum (strain Nichols)).